A 156-amino-acid polypeptide reads, in one-letter code: Acyl carrier protein, mitochondrial (156 aa).

A mitochondrion-targeting transit peptide spans 1-68 (MASRVLSAYV…GRVTQLCRQY (68 aa)). In terms of domain architecture, Carrier spans 77 to 152 (EGIQDRVLYV…EIVDYIADKK (76 aa)). At Lys-88 the chain carries N6-acetyllysine. O-(pantetheine 4'-phosphoryl)serine is present on Ser-112.

It belongs to the acyl carrier protein (ACP) family. Mammalian complex I is composed of 45 different subunits. Interacts with ETFRF1. Identified in a complex composed of MALSU1, MIEF1 upstream open reading frame protein and NDUFAB1; within the trimeric complex, MIEF1 upstream open reading frame protein functions as a bridging scaffold that interacts with MALSU1 on one side, and with NDUFAB1 on the other side. The complex interacts with the mitochondrial large ribosomal subunit. Interacts with alpha-1-microglobulin chain; this interaction is required for the maintenance of mitochondrial redox homeostasis. Component of the mitochondrial core iron-sulfur cluster (ISC) complex composed of NFS1, LYRM4, NDUFAB1, ISCU, FXN, and FDX2; this complex is a heterohexamer containing two copies of each monomer. Component of the cyteine desulfurase complex composed of NFS1, LYRM4 and NDUFAB1; this complex contributes to the stability and cysteine desulfurase activity of NFS1. Post-translationally, phosphopantetheinylation at Ser-112 is essential for interactions with LYR motif-containing proteins.

The protein resides in the mitochondrion. Carrier of the growing fatty acid chain in fatty acid biosynthesis. Accessory and non-catalytic subunit of the mitochondrial membrane respiratory chain NADH dehydrogenase (Complex I), which functions in the transfer of electrons from NADH to the respiratory chain. Accessory protein, of the core iron-sulfur cluster (ISC) assembly complex, that regulates, in association with LYRM4, the stability and the cysteine desulfurase activity of NFS1 and participates in the [2Fe-2S] clusters assembly on the scaffolding protein ISCU. The core iron-sulfur cluster (ISC) assembly complex is involved in the de novo synthesis of a [2Fe-2S] cluster, the first step of the mitochondrial iron-sulfur protein biogenesis. This process is initiated by the cysteine desulfurase complex (NFS1:LYRM4:NDUFAB1) that produces persulfide which is delivered on the scaffold protein ISCU in a FXN-dependent manner. Then this complex is stabilized by FDX2 which provides reducing equivalents to accomplish the [2Fe-2S] cluster assembly. Finally, the [2Fe-2S] cluster is transferred from ISCU to chaperone proteins, including HSCB, HSPA9 and GLRX5. This Pongo pygmaeus (Bornean orangutan) protein is Acyl carrier protein, mitochondrial.